We begin with the raw amino-acid sequence, 398 residues long: MAAAVTVEEVRRAQRAEGPATVLAIGTATPANCVYQADYPDYYFRITKSEHMVELKEKFKRMCDKSQIRKRYMHLTEEILQENPNMCAYMAPSLDARQDIVVVEVPKLGKAAAQKAIKEWGQPRSRITHLVFCTTSGVDMPGADYQLAKMLGLRPNVSRLMMYQQGCFAGGTVLRVAKDLAENNRGARVLAVCSEITAVTFRGPSESHLDSMVGQALFGDGAAAVIVGSDPDEAVERPLFQMVSASQTILPDSEGAIDGHLREVGLTFHLLKDVPGLISKNIERALGDAFTPLGISDWNSIFWVAHPGGPAILDQVEAKVGLDKERMRATRHVLSEYGNMSSACVLFILDEMRKRSAEDGHATTGEGMDWGVLFGFGPGLTVETVVLHSVPITAGAAA.

Position 58-65 (58-65) interacts with CoA; the sequence is KFKRMCDK. Catalysis depends on cysteine 167, which acts as the Acyl-thioester intermediate. Residues threonine 200 and 219 to 220 each bind substrate; that span reads GD. Alanine 311 is a CoA binding site.

The protein belongs to the thiolase-like superfamily. Chalcone/stilbene synthases family. As to quaternary structure, homodimer.

It carries out the reaction (E)-4-coumaroyl-CoA + 3 malonyl-CoA + 3 H(+) = 2',4,4',6'-tetrahydroxychalcone + 3 CO2 + 4 CoA. It participates in secondary metabolite biosynthesis; flavonoid biosynthesis. Functionally, the primary product of this enzyme is 4,2',4',6'-tetrahydroxychalcone (also termed naringenin-chalcone or chalcone) which can under specific conditions spontaneously isomerize into naringenin. The chain is Chalcone synthase 1 (CHS1) from Oryza sativa subsp. indica (Rice).